The primary structure comprises 234 residues: Endonuclease V (234 aa).

Mg(2+)-binding residues include D36 and D104.

Belongs to the endonuclease V family. It depends on Mg(2+) as a cofactor.

It localises to the cytoplasm. The catalysed reaction is Endonucleolytic cleavage at apurinic or apyrimidinic sites to products with a 5'-phosphate.. Its function is as follows. DNA repair enzyme involved in the repair of deaminated bases. Selectively cleaves double-stranded DNA at the second phosphodiester bond 3' to a deoxyinosine leaving behind the intact lesion on the nicked DNA. In Yersinia pestis, this protein is Endonuclease V.